Consider the following 303-residue polypeptide: Serine/threonine-protein phosphatase 6 catalytic subunit (303 aa).

Mn(2+) contacts are provided by Asp-51, His-53, Asp-79, and Asn-111. His-112 functions as the Proton donor in the catalytic mechanism. His-161 and His-235 together coordinate Mn(2+).

This sequence belongs to the PPP phosphatase family. PP-6 (PP-V) subfamily. The cofactor is Mn(2+).

The protein resides in the cytoplasm. The catalysed reaction is O-phospho-L-seryl-[protein] + H2O = L-seryl-[protein] + phosphate. It carries out the reaction O-phospho-L-threonyl-[protein] + H2O = L-threonyl-[protein] + phosphate. Its function is as follows. May be involved in controlling cellularization or in regulating transcription of the genes involved in this process. The sequence is that of Serine/threonine-protein phosphatase 6 catalytic subunit (PpV) from Drosophila melanogaster (Fruit fly).